We begin with the raw amino-acid sequence, 1322 residues long: Centrosome-associated protein Alms1a (1322 aa).

9 disordered regions span residues Met-1 to Arg-26, Thr-53 to Thr-135, Ser-165 to Lys-193, Glu-252 to Tyr-442, Lys-464 to Pro-614, Glu-657 to Asp-752, Ser-814 to Pro-844, Ala-856 to Arg-911, and Ala-1083 to Met-1109. Residues Thr-53–Thr-62 are compositionally biased toward low complexity. Residues Met-78–Arg-111 are compositionally biased toward basic and acidic residues. Residues Ser-165–Glu-189 show a composition bias toward polar residues. Residues Ser-279–Lys-292 show a composition bias toward low complexity. Over residues Glu-309–Arg-318 the composition is skewed to polar residues. The span at Ser-319–Ser-330 shows a compositional bias: low complexity. Residues Asn-338–Arg-350 show a composition bias toward polar residues. The span at Glu-354–Ser-364 shows a compositional bias: acidic residues. Basic and acidic residues-rich tracts occupy residues Ile-365 to Ile-375 and Ser-394 to Arg-408. Over residues Leu-409–Ser-430 the composition is skewed to low complexity. Composition is skewed to basic and acidic residues over residues Lys-464–Gln-487, Pro-495–Gln-512, and Arg-519–Gln-538. 2 stretches are compositionally biased toward low complexity: residues Ser-594–Ser-605 and Glu-657–Ser-669. A compositionally biased stretch (polar residues) spans Gly-678 to Ser-696. A compositionally biased stretch (low complexity) spans Ala-714–Gly-735. Composition is skewed to polar residues over residues Val-737–Thr-751 and Thr-822–Ser-832. Over residues Leu-893–His-907 the composition is skewed to pro residues. Residues Ser-1092–Ser-1107 are compositionally biased toward low complexity. The tract at residues Met-1115–Met-1322 is interaction with Klp10A. Positions Ser-1190–Ala-1309 are ALMS motif.

Belongs to the ALMS1 family. Interacts (via C-terminus) with Klp10A. Interacts with SAK. In terms of tissue distribution, expressed in all germlines, including germline stem cells and spermatogonia.

It is found in the cytoplasm. The protein localises to the cytoskeleton. The protein resides in the microtubule organizing center. Its subcellular location is the centrosome. It localises to the centriole. Its function is as follows. In asymmetrically dividing germline stem cells (GSCs), plays a critical role in ensuring centrosome duplication, which is essential for the production of centrosomes and centrioles in all downstream germ cells. Might recruit SAK for daughter centriole duplication. This is Centrosome-associated protein Alms1a from Drosophila melanogaster (Fruit fly).